A 156-amino-acid chain; its full sequence is Flagellar assembly factor FliW (156 aa).

Belongs to the FliW family. In terms of assembly, interacts with translational regulator CsrA and flagellin(s).

It localises to the cytoplasm. In terms of biological role, acts as an anti-CsrA protein, binds CsrA and prevents it from repressing translation of its target genes, one of which is flagellin. Binds to flagellin and participates in the assembly of the flagellum. The polypeptide is Flagellar assembly factor FliW (Lachnoclostridium phytofermentans (strain ATCC 700394 / DSM 18823 / ISDg) (Clostridium phytofermentans)).